The following is a 129-amino-acid chain: Follitropin subunit beta (129 aa).

Positions 1–20 are cleaved as a signal peptide; the sequence is MKTAQFYVLFFCWKAIWCNG. Intrachain disulfides connect Cys-21–Cys-69, Cys-35–Cys-84, Cys-38–Cys-122, Cys-46–Cys-100, Cys-50–Cys-102, and Cys-105–Cys-112. N-linked (GlcNAc...) asparagine glycosylation is found at Asn-25 and Asn-42.

It belongs to the glycoprotein hormones subunit beta family. As to quaternary structure, heterodimer. The active follitropin is a heterodimer composed of an alpha chain/CGA shared with other hormones and a unique beta chain/FSHB shown here.

It localises to the secreted. In terms of biological role, together with the alpha chain CGA constitutes follitropin, the follicle-stimulating hormone, and provides its biological specificity to the hormone heterodimer. Binds FSHR, a G protein-coupled receptor, on target cells to activate downstream signaling pathways. Follitropin is involved in follicle development and spermatogenesis in reproductive organs. The polypeptide is Follitropin subunit beta (FSHB) (Trichosurus vulpecula (Brush-tailed possum)).